Here is a 242-residue protein sequence, read N- to C-terminus: ATP synthase subunit a (242 aa).

6 consecutive transmembrane segments (helical) span residues 29–49 (SSIY…LAFY), 84–104 (FIPL…LGMT), 114–134 (IIVT…VGFV), 140–160 (FLTL…MIVI), 181–201 (MAGH…MIYL), and 203–223 (FLPI…AILQ).

Belongs to the ATPase A chain family. As to quaternary structure, F-type ATPases have 2 components, CF(1) - the catalytic core - and CF(0) - the membrane proton channel. CF(1) has five subunits: alpha(3), beta(3), gamma(1), delta(1), epsilon(1). CF(0) has three main subunits: a(1), b(2) and c(9-12). The alpha and beta chains form an alternating ring which encloses part of the gamma chain. CF(1) is attached to CF(0) by a central stalk formed by the gamma and epsilon chains, while a peripheral stalk is formed by the delta and b chains.

It is found in the cell inner membrane. Functionally, key component of the proton channel; it plays a direct role in the translocation of protons across the membrane. This is ATP synthase subunit a from Rickettsia rickettsii (strain Sheila Smith).